The primary structure comprises 238 residues: UDP-2,3-diacylglucosamine hydrolase (238 aa).

Positions 8, 10, 41, 78, and 113 each coordinate Mn(2+). 78 to 79 serves as a coordination point for substrate; that stretch reads NR. The substrate site is built by D121, S159, N163, K166, and H194. H194 and H196 together coordinate Mn(2+).

The protein belongs to the LpxH family. It depends on Mn(2+) as a cofactor.

It is found in the cell inner membrane. It catalyses the reaction UDP-2-N,3-O-bis[(3R)-3-hydroxytetradecanoyl]-alpha-D-glucosamine + H2O = 2-N,3-O-bis[(3R)-3-hydroxytetradecanoyl]-alpha-D-glucosaminyl 1-phosphate + UMP + 2 H(+). It participates in glycolipid biosynthesis; lipid IV(A) biosynthesis; lipid IV(A) from (3R)-3-hydroxytetradecanoyl-[acyl-carrier-protein] and UDP-N-acetyl-alpha-D-glucosamine: step 4/6. Hydrolyzes the pyrophosphate bond of UDP-2,3-diacylglucosamine to yield 2,3-diacylglucosamine 1-phosphate (lipid X) and UMP by catalyzing the attack of water at the alpha-P atom. Involved in the biosynthesis of lipid A, a phosphorylated glycolipid that anchors the lipopolysaccharide to the outer membrane of the cell. The protein is UDP-2,3-diacylglucosamine hydrolase of Shewanella piezotolerans (strain WP3 / JCM 13877).